Here is a 564-residue protein sequence, read N- to C-terminus: Eukaryotic translation initiation factor 3 subunit L (564 aa).

Residue serine 2 is modified to N-acetylserine. Serine 21 bears the Phosphoserine mark. Residues 331-537 (DAIRVFANIL…IHIADTKVAR (207 aa)) form the PCI domain. 2 positions are modified to N6-acetyllysine: lysine 465 and lysine 549.

Component of the eukaryotic translation initiation factor 3 (eIF-3) complex, which is composed of 13 subunits: EIF3A, EIF3B, EIF3C, EIF3D, EIF3E, EIF3F, EIF3G, EIF3H, EIF3I, EIF3J, EIF3K, EIF3L and EIF3M. The eIF-3 complex appears to include 3 stable modules: module A is composed of EIF3A, EIF3B, EIF3G and EIF3I; module B is composed of EIF3F, EIF3H, and EIF3M; and module C is composed of EIF3C, EIF3D, EIF3E, EIF3K and EIF3L. EIF3C of module C binds EIF3B of module A and EIF3H of module B, thereby linking the three modules. EIF3J is a labile subunit that binds to the eIF-3 complex via EIF3B. The eIF-3 complex interacts with RPS6KB1 under conditions of nutrient depletion. Mitogenic stimulation leads to binding and activation of a complex composed of MTOR and RPTOR, leading to phosphorylation and release of RPS6KB1 and binding of EIF4B to eIF-3. Interacts with RRN3.

It is found in the cytoplasm. Component of the eukaryotic translation initiation factor 3 (eIF-3) complex, which is required for several steps in the initiation of protein synthesis. The eIF-3 complex associates with the 40S ribosome and facilitates the recruitment of eIF-1, eIF-1A, eIF-2:GTP:methionyl-tRNAi and eIF-5 to form the 43S pre-initiation complex (43S PIC). The eIF-3 complex stimulates mRNA recruitment to the 43S PIC and scanning of the mRNA for AUG recognition. The eIF-3 complex is also required for disassembly and recycling of post-termination ribosomal complexes and subsequently prevents premature joining of the 40S and 60S ribosomal subunits prior to initiation. The eIF-3 complex specifically targets and initiates translation of a subset of mRNAs involved in cell proliferation, including cell cycling, differentiation and apoptosis, and uses different modes of RNA stem-loop binding to exert either translational activation or repression. In terms of biological role, (Microbial infection) In case of FCV infection, plays a role in the ribosomal termination-reinitiation event leading to the translation of VP2. This Homo sapiens (Human) protein is Eukaryotic translation initiation factor 3 subunit L.